Consider the following 1091-residue polypeptide: ATP-citrate synthase (1091 aa).

Residues 4–265 (KAISEQTGKE…LDAKSGASLK (262 aa)) enclose the ATP-grasp domain. Residues K58, R66, G67, P109, V111, and E118 each coordinate ATP. Y131 bears the Phosphotyrosine mark. Residue D216 participates in ATP binding. Mg(2+) is bound by residues D257, S260, and A262. Phosphoserine is present on S263. Citrate-binding residues include G309, N346, T348, Y364, and R379. A compositionally biased stretch (low complexity) spans 442 to 457 (SGSTSTPAPSRTASFS). The segment at 442-478 (SGSTSTPAPSRTASFSESRADEVAPAKKAKPAMPQGK) is disordered. T447 bears the Phosphothreonine mark. S451 carries the phosphoserine modification. The residue at position 455 (S455) is a Phosphoserine; by PKA and PKB/AKT1 or PKB/AKT2 or BCKDK. S459 is modified (phosphoserine). K530, K536, and K544 each carry N6-acetyllysine; alternate. Glycyl lysine isopeptide (Lys-Gly) (interchain with G-Cter in ubiquitin); alternate cross-links involve residues K530, K536, and K544. T629 is subject to Phosphothreonine. S653 bears the Phosphoserine mark. Y672 is subject to Phosphotyrosine. H750 acts as the Tele-phosphohistidine intermediate in catalysis. 769–779 (LKEAGVFVPRS) is a binding site for CoA. S829 bears the Phosphoserine mark. 4 positions are modified to N6-acetyllysine: K938, K958, K968, and K1067. S1090 bears the Phosphoserine mark.

This sequence in the N-terminal section; belongs to the succinate/malate CoA ligase beta subunit family. In the C-terminal section; belongs to the succinate/malate CoA ligase alpha subunit family. Homotetramer. It depends on Mg(2+) as a cofactor. Phosphorylated by PKA and GSK3 in a sequential manner; phosphorylation results in activation of its activity. Phosphorylation on Thr-447 and Ser-451 depends on the phosphorylation state of Ser-455. Phosphorylation on Ser-455 is decreased by prior phosphorylation on the other 2 residues. Phosphorylated at Ser-455 by BCKDK and dephosphorylated by protein phosphatase PPM1K. In terms of processing, ISGylated. Post-translationally, acetylated at Lys-530, Lys-536 and Lys-544 by KAT2B/PCAF. Acetylation is promoted by glucose and stabilizes the protein, probably by preventing ubiquitination at the same sites. Acetylation promotes de novo lipid synthesis. Deacetylated by SIRT2. Ubiquitinated at Lys-530, Lys-536 and Lys-544 by the BCR(KLHL25) E3 ubiquitin ligase complex and UBR4, leading to its degradation. Ubiquitination is probably inhibited by acetylation at same site. BCR(KLHL25)-mediated degradation of ACLY promotes fatty acid oxidation and is required for differentiation of inducible regulatory T (iTreg) cells.

The protein resides in the cytoplasm. Its subcellular location is the cytosol. It carries out the reaction oxaloacetate + acetyl-CoA + ADP + phosphate = citrate + ATP + CoA. Its activity is regulated as follows. Phosphorylation results in activation of its activity. Glucose 6-phosphate, fructose 6-phosphate, fructose 2,6-bisphosphate, ribulose 5-phosphate, and fructose 1,6-bisphosphate also act as activators. Its function is as follows. Catalyzes the cleavage of citrate into oxaloacetate and acetyl-CoA, the latter serving as common substrate in multiple biochemical reactions in protein, carbohydrate and lipid metabolism. In Mus musculus (Mouse), this protein is ATP-citrate synthase (Acly).